Reading from the N-terminus, the 337-residue chain is Phosphate acyltransferase (337 aa).

It belongs to the PlsX family. As to quaternary structure, homodimer. Probably interacts with PlsY.

It is found in the cytoplasm. The enzyme catalyses a fatty acyl-[ACP] + phosphate = an acyl phosphate + holo-[ACP]. The protein operates within lipid metabolism; phospholipid metabolism. Its function is as follows. Catalyzes the reversible formation of acyl-phosphate (acyl-PO(4)) from acyl-[acyl-carrier-protein] (acyl-ACP). This enzyme utilizes acyl-ACP as fatty acyl donor, but not acyl-CoA. This Latilactobacillus sakei subsp. sakei (strain 23K) (Lactobacillus sakei subsp. sakei) protein is Phosphate acyltransferase.